An 830-amino-acid chain; its full sequence is Lon protease (830 aa).

The 196-residue stretch at 20–215 folds into the Lon N-terminal domain; that stretch reads LPAVAIRDVV…LLIKILANEV (196 aa). Residue 367 to 374 coordinates ATP; the sequence is GPPGVGKT. The Lon proteolytic domain maps to 602–781; sequence ENGVGISTGL…DEIVKIAFEK (180 aa). Catalysis depends on residues serine 687 and lysine 730. The tract at residues 784–830 is disordered; it reads PKSSFKKSKTAPKKESAKKAAKSKKPAVKKPAVKKTKQVKKTAKKKK. Over residues 802–830 the composition is skewed to basic residues; that stretch reads KAAKSKKPAVKKPAVKKTKQVKKTAKKKK.

It belongs to the peptidase S16 family. Homohexamer. Organized in a ring with a central cavity.

The protein resides in the cytoplasm. The catalysed reaction is Hydrolysis of proteins in presence of ATP.. In terms of biological role, ATP-dependent serine protease that mediates the selective degradation of mutant and abnormal proteins as well as certain short-lived regulatory proteins. Required for cellular homeostasis and for survival from DNA damage and developmental changes induced by stress. Degrades polypeptides processively to yield small peptide fragments that are 5 to 10 amino acids long. Binds to DNA in a double-stranded, site-specific manner. This is Lon protease from Elusimicrobium minutum (strain Pei191).